We begin with the raw amino-acid sequence, 127 residues long: Alkaline proteinase inhibitor (127 aa).

Residues 1–26 (MNINYFVRIVPVAVVLLVGISGASMA) form the signal peptide. Cys53 and Cys70 are oxidised to a cystine.

Belongs to the protease inhibitor I38 family.

The protein localises to the periplasm. Functionally, inhibitor of the alkaline protease. The sequence is that of Alkaline proteinase inhibitor (inh) from Pseudomonas syringae pv. tomato (strain ATCC BAA-871 / DC3000).